The following is a 1041-amino-acid chain: Putative transcription elongation factor SPT5 homolog 1 (1041 aa).

The disordered stretch occupies residues 1 to 133; it reads MPRSRDEDDE…ERGDRRYERR (133 aa). Acidic residues-rich tracts occupy residues 7–32, 53–69, and 99–114; these read EDDELDGDYEALDLEEEEEEDEEEEE, DYAEEDSQEEDDDDEDY, and DDEDEEEEDEAEDDFI. Ser-59 bears the Phosphoserine mark. The segment covering 122–133 has biased composition (basic and acidic residues); sequence PDERGDRRYERR. KOW domains follow at residues 273–300, 425–452, 477–504, and 601–628; these read DLSRDTWVRMKIGTYKGDLAKVVDVDNV, HFMKGDAVIVIKGDLKNLKGWVEKVDEE, YFEPGNHVKVVSGTHEGATGMVVKVDQH, and VIAVKDDVRVIEGPSKGKQGPVKHIYKG. Disordered stretches follow at residues 662 to 713 and 768 to 921; these read NRNG…GDDS and DTSR…GTGL. The span at 691 to 703 shows a compositional bias: gly residues; the sequence is GRGGGYNNSGGRH. Positions 712 to 739 constitute a KOW 5 domain; sequence DSLLGTTVKIRLGPFKGYRGPVVEVKGN. Residues 804-814 are compositionally biased toward basic and acidic residues; it reads DGMRTPMRDRA. 2 stretches are compositionally biased toward polar residues: residues 835 to 844 and 893 to 904; these read SWGTSPQYQP and TPGQPMTPSSAS. The 28-residue stretch at 988–1015 folds into the KOW 6 domain; the sequence is PPRKSDRVKIVGGQYRGSTGKLIGIDGS.

This sequence belongs to the SPT5 family.

Its subcellular location is the nucleus. May regulate transcription elongation by RNA polymerase II. May enhance transcriptional pausing at sites proximal to the promoter, which may in turn facilitate the assembly of an elongation competent RNA polymerase II complex. This chain is Putative transcription elongation factor SPT5 homolog 1, found in Arabidopsis thaliana (Mouse-ear cress).